The following is a 48-amino-acid chain: Disintegrin leucogastin-A (48 aa).

The region spanning 1–47 is the Disintegrin domain; it reads DCASGPCCRDCKFLEEFTICNMARGDDMNDYCNGKTCDCPRNPHKWP. Cystine bridges form between Cys-2–Cys-11, Cys-7–Cys-32, Cys-8–Cys-37, and Cys-20–Cys-39. A Cell attachment site motif is present at residues 24–26; the sequence is RGD.

Belongs to the venom metalloproteinase (M12B) family. P-II subfamily. P-IIa sub-subfamily. In terms of assembly, monomer (disintegrin). In terms of tissue distribution, expressed by the venom gland.

It localises to the secreted. Functionally, inhibits ADP-induced human platelet aggregation. The chain is Disintegrin leucogastin-A from Echis leucogaster (Roman's saw-scaled viper).